Here is a 1785-residue protein sequence, read N- to C-terminus: Mellein synthase (1785 aa).

The tract at residues 1-36 (MATPDDPATPALSLSASNSSSPTAASSVPPPTGTSE) is disordered. Residues 8 to 27 (ATPALSLSASNSSSPTAASS) show a composition bias toward low complexity. Positions 39 to 464 (YDDVAIIGMS…GTVSHAIIEQ (426 aa)) constitute a Ketosynthase family 3 (KS3) domain. Active-site for beta-ketoacyl synthase activity residues include cysteine 211, histidine 346, and histidine 386. Residues 575–888 (VWVFSGHGSH…AVAQLWTKGV (314 aa)) form a malonyl-CoA:ACP transacylase (MAT) domain region. Serine 661 acts as the For malonyltransferase activity in catalysis. The N-terminal hotdog fold stretch occupies residues 933–1047 (NNMLGQRMVV…ASWENEPSAN (115 aa)). The PKS/mFAS DH domain maps to 933–1206 (NNMLGQRMVV…FTEVEATPTK (274 aa)). Residues 935–1203 (MLGQRMVVAG…SIRFTEVEAT (269 aa)) are dehydratase (DH) domain. The active-site Proton acceptor; for dehydratase activity is histidine 965. The segment at 1062–1206 (GTRVSETFSV…FTEVEATPTK (145 aa)) is C-terminal hotdog fold. Residue aspartate 1123 is the Proton donor; for dehydratase activity of the active site. A ketoreductase (KR) domain region spans residues 1418 to 1608 (GTYVLTGGLG…AIAFQWTAWR (191 aa)). Residues 1681–1698 (QDQSAPASGNASDSSGRP) are compositionally biased toward polar residues. The interval 1681–1701 (QDQSAPASGNASDSSGRPTAS) is disordered. Residues 1706–1781 (PWLDVKIREC…AMVGWFQKQF (76 aa)) form the Carrier domain. At serine 1741 the chain carries O-(pantetheine 4'-phosphoryl)serine.

It participates in secondary metabolite biosynthesis. Polyketide synthase that produces (R)-mellein, a secondary metabolite that inhibits the germination of wheat (Triticum aestivum) and barrel medic (Medicago truncatula) seeds. Condensates 1 acetate starter unit and 4 extender malonate units. The nascent pentaketide intermediate then undergoes an aldol cyclization and is aromatized via dehydration. The (R)-O-methylmellein isolated from P.nodorum is most likely to be derived from (R)-mellein via an additional methylation at the hydroxyl group. Interestingly, no O-methyltransferase gene is encoded in the vicinity of MLNS on the chromosome. Thus, the O-methylation is likely to be catalyzed by an endogenous O-methyltransferase encoded elsewhere in the genome of P.nodorum. The protein is Mellein synthase of Phaeosphaeria nodorum (strain SN15 / ATCC MYA-4574 / FGSC 10173) (Glume blotch fungus).